The sequence spans 847 residues: Leucine--tRNA ligase (847 aa).

The 'HIGH' region signature appears at 41–51 (PYPSGRIHMGH). Positions 619 to 623 (KMSKS) match the 'KMSKS' region motif. Residue K622 coordinates ATP.

Belongs to the class-I aminoacyl-tRNA synthetase family.

It localises to the cytoplasm. The catalysed reaction is tRNA(Leu) + L-leucine + ATP = L-leucyl-tRNA(Leu) + AMP + diphosphate. The protein is Leucine--tRNA ligase of Cereibacter sphaeroides (strain ATCC 17029 / ATH 2.4.9) (Rhodobacter sphaeroides).